We begin with the raw amino-acid sequence, 284 residues long: Bifunctional protein FolD (284 aa).

Residues 166 to 168 and isoleucine 232 each bind NADP(+); that span reads GAS.

This sequence belongs to the tetrahydrofolate dehydrogenase/cyclohydrolase family. In terms of assembly, homodimer.

The enzyme catalyses (6R)-5,10-methylene-5,6,7,8-tetrahydrofolate + NADP(+) = (6R)-5,10-methenyltetrahydrofolate + NADPH. It carries out the reaction (6R)-5,10-methenyltetrahydrofolate + H2O = (6R)-10-formyltetrahydrofolate + H(+). It participates in one-carbon metabolism; tetrahydrofolate interconversion. Catalyzes the oxidation of 5,10-methylenetetrahydrofolate to 5,10-methenyltetrahydrofolate and then the hydrolysis of 5,10-methenyltetrahydrofolate to 10-formyltetrahydrofolate. This is Bifunctional protein FolD from Pseudomonas putida (strain W619).